We begin with the raw amino-acid sequence, 73 residues long: RNA-binding protein Hfq (73 aa).

A Sm domain is found at 8-68; the sequence is DQFLNQIRKE…ISTFAPQKNV (61 aa).

The protein belongs to the Hfq family. Homohexamer.

In terms of biological role, RNA chaperone that binds small regulatory RNA (sRNAs) and mRNAs to facilitate mRNA translational regulation in response to envelope stress, environmental stress and changes in metabolite concentrations. Also binds with high specificity to tRNAs. This is RNA-binding protein Hfq from Bacillus licheniformis (strain ATCC 14580 / DSM 13 / JCM 2505 / CCUG 7422 / NBRC 12200 / NCIMB 9375 / NCTC 10341 / NRRL NRS-1264 / Gibson 46).